We begin with the raw amino-acid sequence, 1703 residues long: Arf-GAP with Rho-GAP domain, ANK repeat and PH domain-containing protein 2 (1703 aa).

The region spanning 6–70 (EVNADIRDFL…LKQLQMIFSK (65 aa)) is the SAM domain. Position 77 is a phosphotyrosine (Tyr77). Disordered stretches follow at residues 84 to 132 (KNGS…LSEG), 191 to 232 (EEHT…NGTN), and 286 to 319 (PVPE…LTLK). 3 stretches are compositionally biased toward polar residues: residues 85-103 (NGST…STHT), 123-132 (MVTTSTLSEG), and 197-214 (GNLT…NTEC). Residues 222–232 (TSGTHSGNGTN) show a composition bias toward low complexity. Residues 308-319 (NTTSAGKSLTLK) show a composition bias toward polar residues. PH domains follow at residues 480–572 (AKEK…SALK) and 585–677 (APEK…QSIA). Positions 674–809 (QSIAETLSDY…TLLASLTKEE (136 aa)) constitute an Arf-GAP domain. The C4-type zinc finger occupies 698 to 721 (CADCKAPDPDWASINLCVVICKKC). 2 consecutive PH domains span residues 899–1001 (QTAA…KRFV) and 1012–1110 (DYDL…KAAG). One can recognise a Rho-GAP domain in the interval 1114–1295 (NALQDQQLCK…DLINNYVEIF (182 aa)). The 95-residue stretch at 1324-1418 (GDLLIEVFVE…AYLVVKRFLT (95 aa)) folds into the Ras-associating domain. In terms of domain architecture, PH 5 spans 1428–1531 (KSIKEGILKL…WMASIFIAQH (104 aa)). Residue Ser1627 is modified to Phosphoserine. 2 disordered regions span residues 1633–1670 (DTEA…DPKL) and 1684–1703 (RSRP…KEVK). Composition is skewed to basic and acidic residues over residues 1653–1670 (KKTE…DPKL) and 1688–1703 (LHKE…KEVK).

It is found in the cytoplasm. Its function is as follows. Phosphatidylinositol 3,4,5-trisphosphate-dependent GTPase-activating protein that modulates actin cytoskeleton remodeling by regulating ARF and RHO family members. Is activated by phosphatidylinositol 3,4,5-trisphosphate (PtdIns(3,4,5)P3) binding. Can be activated by phosphatidylinositol 3,4-bisphosphate (PtdIns(3,4,5)P2) binding, albeit with lower efficiency. The chain is Arf-GAP with Rho-GAP domain, ANK repeat and PH domain-containing protein 2 (Arap2) from Mus musculus (Mouse).